The primary structure comprises 172 residues: Cystatin-like cysteine protease inhibitor EPIC4 (172 aa).

Residues Met-1–Ala-17 form the signal peptide. The Secondary area of contact motif lies at Gln-71–Gly-75. Residues Glu-129–Val-172 are disordered. Over residues Ala-130–Thr-156 the composition is skewed to low complexity. The span at Met-157–Ala-166 shows a compositional bias: polar residues.

It belongs to the cystatin family.

It is found in the secreted. Secreted effector that interacts with and inhibits host apoplastic pathogenesis-related papain-like cysteine proteases. Inhibition of host proteases by a pathogen extracellular protease inhibitor forms a specific type of defense-counterdefense mechanism between plants and microbial pathogens. The chain is Cystatin-like cysteine protease inhibitor EPIC4 from Phytophthora infestans (Potato late blight agent).